Here is a 305-residue protein sequence, read N- to C-terminus: MTNQYSILFKQEQAHDDAIWSVAWETNKKENIETVVTGSLDDLVKVWKWRDERLELQWSLEGHQLGVVSVDISHTLPIAASSSLDAHIRLWDLENGKQMKSIDAGPVDAWTLAFSPDSQHLATGTHMGKVNIFGVESGKKEYSLDTRGKFILSIAYSPDGKYLASGAIDGIINIFDIATGKLLHTLEGHAMPIRSLTFSPDSQLLVTASDDGYIKIYDVQHANLAGTLSGHASWVLNVAFCPDDTHFVSSSSDKSVKVWDVGTRTCIHTFFDHQDQVWGVKYNGNGSKIVSVGDDQEIHVYDCPI.

M1 bears the N-acetylmethionine mark. Residue T2 is modified to N-acetylthreonine; in WD repeat-containing protein 61, N-terminally processed. WD repeat units follow at residues 14–57 (AHDD…LELQ), 62–101 (GHQL…QMKS), 104–143 (AGPV…KEYS), 146–187 (TRGK…HTLE), 188–227 (GHAM…LAGT), 230–269 (GHAS…CIHT), and 272–305 (DHQD…DCPI).

Belongs to the SKI8 family. In terms of assembly, component of the PAF1 complex, which consists of CDC73, PAF1, LEO1, CTR9, RTF1 and SKIC8. The PAF1 complex interacts with PHF5A. Within the PAF1 complex interacts directly with PHF5A. Component of the SKI complex which consists of SKIC2, SKIC3 and SKIC8.

The protein resides in the nucleus. It is found in the cytoplasm. Component of the PAF1 complex (PAF1C) which has multiple functions during transcription by RNA polymerase II and is implicated in regulation of development and maintenance of embryonic stem cell pluripotency. PAF1C associates with RNA polymerase II through interaction with POLR2A CTD non-phosphorylated and 'Ser-2'- and 'Ser-5'-phosphorylated forms and is involved in transcriptional elongation, acting both independently and synergistically with TCEA1 and in cooperation with the DSIF complex and HTATSF1. PAF1C is required for transcription of Hox and Wnt target genes. PAF1C is involved in hematopoiesis and stimulates transcriptional activity of KMT2A/MLL1; it promotes leukemogenesis through association with KMT2A/MLL1-rearranged oncoproteins, such as KMT2A/MLL1-MLLT3/AF9 and KMT2A/MLL1-MLLT1/ENL. PAF1C is involved in histone modifications such as ubiquitination of histone H2B and methylation on histone H3 'Lys-4' (H3K4me3). PAF1C recruits the RNF20/40 E3 ubiquitin-protein ligase complex and the E2 enzyme UBE2A or UBE2B to chromatin which mediate monoubiquitination of 'Lys-120' of histone H2B (H2BK120ub1); UB2A/B-mediated H2B ubiquitination is proposed to be coupled to transcription. PAF1C is involved in mRNA 3' end formation probably through association with cleavage and poly(A) factors. In case of infection by influenza A strain H3N2, PAF1C associates with viral NS1 protein, thereby regulating gene transcription. Required for mono- and trimethylation on histone H3 'Lys-4' (H3K4me3), dimethylation on histone H3 'Lys-79' (H3K4me3). Required for Hox gene transcription. Also acts as a component of the SKI complex, a multiprotein complex that assists the RNA-degrading exosome during the mRNA decay and quality-control pathways. The SKI complex catalyzes mRNA extraction from 80S ribosomal complexes in the 3'-5' direction and channels mRNA to the cytosolic exosome for degradation. SKI-mediated extraction of mRNA from stalled ribosomes allow binding of the Pelota-HBS1L complex and subsequent ribosome disassembly by ABCE1 for ribosome recycling. The protein is Superkiller complex protein 8 (Skic8) of Rattus norvegicus (Rat).